A 96-amino-acid chain; its full sequence is Exodeoxyribonuclease 7 small subunit (96 aa).

A compositionally biased stretch (basic and acidic residues) spans 61–79 (ALTKDESQKTNKTGFRTES). Positions 61–96 (ALTKDESQKTNKTGFRTESKSTSQTSSDSVLEEDLF) are disordered. Residues 80 to 89 (KSTSQTSSDS) show a composition bias toward low complexity.

The protein belongs to the XseB family. As to quaternary structure, heterooligomer composed of large and small subunits.

The protein localises to the cytoplasm. The catalysed reaction is Exonucleolytic cleavage in either 5'- to 3'- or 3'- to 5'-direction to yield nucleoside 5'-phosphates.. Functionally, bidirectionally degrades single-stranded DNA into large acid-insoluble oligonucleotides, which are then degraded further into small acid-soluble oligonucleotides. This chain is Exodeoxyribonuclease 7 small subunit, found in Leptospira borgpetersenii serovar Hardjo-bovis (strain JB197).